Consider the following 239-residue polypeptide: Orotidine 5'-phosphate decarboxylase (239 aa).

Residues D15, K36, D63–T72, T127, R189, Q198, G218, and R219 each bind substrate. Catalysis depends on K65, which acts as the Proton donor.

The protein belongs to the OMP decarboxylase family. Type 1 subfamily. As to quaternary structure, homodimer.

The enzyme catalyses orotidine 5'-phosphate + H(+) = UMP + CO2. It participates in pyrimidine metabolism; UMP biosynthesis via de novo pathway; UMP from orotate: step 2/2. Its function is as follows. Catalyzes the decarboxylation of orotidine 5'-monophosphate (OMP) to uridine 5'-monophosphate (UMP). This chain is Orotidine 5'-phosphate decarboxylase, found in Prochlorococcus marinus subsp. pastoris (strain CCMP1986 / NIES-2087 / MED4).